A 120-amino-acid polypeptide reads, in one-letter code: UPF0145 protein UNCMA_30400 (120 aa).

It belongs to the UPF0145 family.

The chain is UPF0145 protein UNCMA_30400 from Methanocella arvoryzae (strain DSM 22066 / NBRC 105507 / MRE50).